A 494-amino-acid chain; its full sequence is Tyrosinase (494 aa).

Positions 38, 53, 64, 224, 228, and 256 each coordinate Cu cation.

This sequence belongs to the tyrosinase family. It depends on Cu(2+) as a cofactor.

The catalysed reaction is 2 L-dopa + O2 = 2 L-dopaquinone + 2 H2O. It carries out the reaction L-tyrosine + O2 = L-dopaquinone + H2O. The protein is Tyrosinase (mepA) of Rhizobium meliloti (Ensifer meliloti).